A 216-amino-acid chain; its full sequence is DNA gyrase subunit B (216 aa).

The Toprim domain maps to 140-216; sequence SELYLVEGDS…PDKLRYHKII (77 aa).

It belongs to the type II topoisomerase GyrB family. In terms of assembly, heterotetramer, composed of two GyrA and two GyrB chains. In the heterotetramer, GyrA contains the active site tyrosine that forms a transient covalent intermediate with DNA, while GyrB binds cofactors and catalyzes ATP hydrolysis.

It is found in the cytoplasm. It catalyses the reaction ATP-dependent breakage, passage and rejoining of double-stranded DNA.. Functionally, a type II topoisomerase that negatively supercoils closed circular double-stranded (ds) DNA in an ATP-dependent manner to modulate DNA topology and maintain chromosomes in an underwound state. Negative supercoiling favors strand separation, and DNA replication, transcription, recombination and repair, all of which involve strand separation. Also able to catalyze the interconversion of other topological isomers of dsDNA rings, including catenanes and knotted rings. Type II topoisomerases break and join 2 DNA strands simultaneously in an ATP-dependent manner. In Acinetobacter sp. (strain T4), this protein is DNA gyrase subunit B (gyrB).